A 177-amino-acid polypeptide reads, in one-letter code: Transmembrane protein 196 (177 aa).

The next 4 helical transmembrane spans lie at 11 to 31 (LLVLSVLEIGLGLSSVAVGAV), 47 to 67 (SSPVWSGACFLICGVCGIFCA), 73 to 93 (LIMILFSACCICGLIGGILNI), and 106 to 126 (LYSLYLASMSLACIGISGCTI). A compositionally biased stretch (basic and acidic residues) spans 152-162 (HSHEMTEKDTE). A disordered region spans residues 152–177 (HSHEMTEKDTENITNGGGPLALNGRV).

It is found in the cytoplasm. It localises to the membrane. This is Transmembrane protein 196 (tmem196) from Xenopus tropicalis (Western clawed frog).